Consider the following 333-residue polypeptide: Ornithine carbamoyltransferase (333 aa).

Carbamoyl phosphate-binding positions include serine 56 to threonine 59, arginine 107, and histidine 134 to glutamine 137. L-ornithine contacts are provided by residues asparagine 167, aspartate 231, and serine 235–methionine 236. Residues cysteine 273–leucine 274 and arginine 318 each bind carbamoyl phosphate.

It belongs to the aspartate/ornithine carbamoyltransferase superfamily. OTCase family.

It localises to the cytoplasm. It catalyses the reaction carbamoyl phosphate + L-ornithine = L-citrulline + phosphate + H(+). Its pathway is amino-acid degradation; L-arginine degradation via ADI pathway; carbamoyl phosphate from L-arginine: step 2/2. In terms of biological role, reversibly catalyzes the transfer of the carbamoyl group from carbamoyl phosphate (CP) to the N(epsilon) atom of ornithine (ORN) to produce L-citrulline. This Clostridium botulinum (strain 657 / Type Ba4) protein is Ornithine carbamoyltransferase.